Consider the following 203-residue polypeptide: Glycerol-3-phosphate acyltransferase (203 aa).

The next 4 membrane-spanning stretches (helical) occupy residues 4 to 24 (LVLL…AVLI), 80 to 100 (PFLL…PIFF), 116 to 136 (APIG…TVFI), and 138 to 158 (GYSS…TWFV).

Belongs to the PlsY family. As to quaternary structure, probably interacts with PlsX.

The protein resides in the cell inner membrane. The catalysed reaction is an acyl phosphate + sn-glycerol 3-phosphate = a 1-acyl-sn-glycero-3-phosphate + phosphate. Its pathway is lipid metabolism; phospholipid metabolism. In terms of biological role, catalyzes the transfer of an acyl group from acyl-phosphate (acyl-PO(4)) to glycerol-3-phosphate (G3P) to form lysophosphatidic acid (LPA). This enzyme utilizes acyl-phosphate as fatty acyl donor, but not acyl-CoA or acyl-ACP. The protein is Glycerol-3-phosphate acyltransferase of Photobacterium profundum (strain SS9).